A 138-amino-acid chain; its full sequence is MAEVQQLRVQEAVDAMVKSVERENIRKMQGLMFRCSANCCEDTQASMQQVHQCIERCHAPLAQAQALVTSELERFQDRLARCTMHCNDKAKDSMDAGTKELQVKRQLDSCVTKCVDDHMHLIPTMTKKMKESLSSIGK.

N-acetylalanine is present on Ala-2. Thr-124 and Thr-126 each carry phosphothreonine.

It belongs to the FAM136 family.

This Mus musculus (Mouse) protein is Protein FAM136A (Fam136a).